Here is a 96-residue protein sequence, read N- to C-terminus: Muconolactone Delta-isomerase 1 (96 aa).

It belongs to the muconolactone Delta-isomerase family. Homodecamer.

It catalyses the reaction (S)-muconolactone = (4,5-dihydro-5-oxofuran-2-yl)-acetate. It functions in the pathway aromatic compound metabolism; beta-ketoadipate pathway; 5-oxo-4,5-dihydro-2-furylacetate from catechol: step 3/3. This is Muconolactone Delta-isomerase 1 (catC1) from Acinetobacter lwoffii.